Reading from the N-terminus, the 561-residue chain is Arginine--tRNA ligase (561 aa).

Residues 129–139 (ANPTGPLHVGH) carry the 'HIGH' region motif.

Belongs to the class-I aminoacyl-tRNA synthetase family. As to quaternary structure, monomer.

The protein localises to the cytoplasm. It catalyses the reaction tRNA(Arg) + L-arginine + ATP = L-arginyl-tRNA(Arg) + AMP + diphosphate. The sequence is that of Arginine--tRNA ligase from Bordetella avium (strain 197N).